The chain runs to 902 residues: Phosphoenolpyruvate carboxylase (902 aa).

The active site involves His132. Residues 327-346 are disordered; that stretch reads DALERPEKTAGKKSSKRTPY. Lys561 is a catalytic residue.

This sequence belongs to the PEPCase type 1 family. Mg(2+) serves as cofactor.

It carries out the reaction oxaloacetate + phosphate = phosphoenolpyruvate + hydrogencarbonate. Its function is as follows. Forms oxaloacetate, a four-carbon dicarboxylic acid source for the tricarboxylic acid cycle. This is Phosphoenolpyruvate carboxylase from Corynebacterium diphtheriae (strain ATCC 700971 / NCTC 13129 / Biotype gravis).